Here is a 115-residue protein sequence, read N- to C-terminus: UPF0738 protein SE_0694 (115 aa).

The protein belongs to the UPF0738 family.

In Staphylococcus epidermidis (strain ATCC 12228 / FDA PCI 1200), this protein is UPF0738 protein SE_0694.